A 145-amino-acid polypeptide reads, in one-letter code: Probable transport accessory protein MmpS2 (145 aa).

Residues 11–31 (MWLLLAIVVVAVVGGLGIYRL) traverse the membrane as a helical segment.

It belongs to the MmpS family.

The protein localises to the cell membrane. This chain is Probable transport accessory protein MmpS2 (mmpS2), found in Mycobacterium bovis (strain ATCC BAA-935 / AF2122/97).